Consider the following 398-residue polypeptide: Dual-specificity RNA methyltransferase RlmN (398 aa).

The Proton acceptor role is filled by Glu-119. Residues 125-364 (EADRATLCVS…TIVRKTRGDD (240 aa)) enclose the Radical SAM core domain. Cys-132 and Cys-369 are joined by a disulfide. [4Fe-4S] cluster is bound by residues Cys-139, Cys-143, and Cys-146. S-adenosyl-L-methionine-binding positions include 193-194 (GE), Ser-225, 247-249 (SLH), and Asn-326. Cys-369 serves as the catalytic S-methylcysteine intermediate.

It belongs to the radical SAM superfamily. RlmN family. Requires [4Fe-4S] cluster as cofactor.

Its subcellular location is the cytoplasm. It catalyses the reaction adenosine(2503) in 23S rRNA + 2 reduced [2Fe-2S]-[ferredoxin] + 2 S-adenosyl-L-methionine = 2-methyladenosine(2503) in 23S rRNA + 5'-deoxyadenosine + L-methionine + 2 oxidized [2Fe-2S]-[ferredoxin] + S-adenosyl-L-homocysteine. The enzyme catalyses adenosine(37) in tRNA + 2 reduced [2Fe-2S]-[ferredoxin] + 2 S-adenosyl-L-methionine = 2-methyladenosine(37) in tRNA + 5'-deoxyadenosine + L-methionine + 2 oxidized [2Fe-2S]-[ferredoxin] + S-adenosyl-L-homocysteine. Its function is as follows. Specifically methylates position 2 of adenine 2503 in 23S rRNA and position 2 of adenine 37 in tRNAs. m2A2503 modification seems to play a crucial role in the proofreading step occurring at the peptidyl transferase center and thus would serve to optimize ribosomal fidelity. This Yersinia pestis protein is Dual-specificity RNA methyltransferase RlmN.